Here is a 218-residue protein sequence, read N- to C-terminus: LexA repressor (218 aa).

The segment at residues 28 to 48 is a DNA-binding region (H-T-H motif); sequence RAEIAAEFGFSSPNAAEEHLR. Active-site for autocatalytic cleavage activity residues include S136 and K173.

It belongs to the peptidase S24 family. As to quaternary structure, homodimer.

It catalyses the reaction Hydrolysis of Ala-|-Gly bond in repressor LexA.. Represses a number of genes involved in the response to DNA damage (SOS response), including recA and lexA. In the presence of single-stranded DNA, RecA interacts with LexA causing an autocatalytic cleavage which disrupts the DNA-binding part of LexA, leading to derepression of the SOS regulon and eventually DNA repair. This Cupriavidus pinatubonensis (strain JMP 134 / LMG 1197) (Cupriavidus necator (strain JMP 134)) protein is LexA repressor.